Here is a 281-residue protein sequence, read N- to C-terminus: Putrescine transport system permease protein PotI (281 aa).

Over 1–13 (MNNLPVVRSPWRI) the chain is Cytoplasmic. The helical transmembrane segment at 14-33 (VILLLGFTFLYAPMLMLVIY) threads the bilayer. Topologically, residues 34–68 (SFNSSKLVTVWAGWSTRWYGELLRDDAMMSAVGLS) are periplasmic. In terms of domain architecture, ABC transmembrane type-1 spans 65–260 (VGLSLTIAAC…GAVGIVGFIA (196 aa)). The chain crosses the membrane as a helical span at residues 69-88 (LTIAACAATAAAILGTIAAV). The Cytoplasmic portion of the chain corresponds to 89–115 (VLVRFGRFRGSNGFAFMITAPLVMPDV). The chain crosses the membrane as a helical span at residues 116–135 (ITGLSLLLLFVALAHAIGWP). Over 136-140 (ADRGM) the chain is Periplasmic. Residues 141–160 (LTIWLAHVTFCTAYVAVVIS) traverse the membrane as a helical segment. Residues 161–186 (SRLRELDRSIEEAAMDLGATPLKVFF) are Cytoplasmic-facing. Residues 187–206 (VITLPMIMPAIISGWLLAFT) traverse the membrane as a helical segment. Over 207-243 (LSLDDLVIASFVSGPGATTLPMLVFSSVRMGVNPEIN) the chain is Periplasmic. The helical transmembrane segment at 244–263 (ALATLILGAVGIVGFIAWYL) threads the bilayer. Residues 264 to 281 (MARAEKQRIRDIQRARRG) are Cytoplasmic-facing.

Belongs to the binding-protein-dependent transport system permease family. CysTW subfamily. The complex is composed of two ATP-binding proteins (PotG), two transmembrane proteins (PotH and PotI) and a solute-binding protein (PotF).

The protein resides in the cell inner membrane. Functionally, part of the ABC transporter complex PotFGHI involved in putrescine uptake. Responsible for the translocation of the substrate across the membrane. The sequence is that of Putrescine transport system permease protein PotI from Escherichia coli O6:H1 (strain CFT073 / ATCC 700928 / UPEC).